The following is a 250-amino-acid chain: MSQVAKAAATTAVNPGPDGKGKGTPSTGTAPAPGPTPVPASVPRPAAKVGELPPGSYRLVVFEQENFQGRRVEFSGECLNLGDRGFDRVRSLIVLSGPWVAFEQSAFRGEMFVLEKGEYPRWDTWTSSYRSDRLMSFRPIRMDSQEHKICLFEGANFKGNTMEIQEDDVPSLWVYGFCDRVGSITVSSGTWVGYQYPGYRGYQYLLEPGDFRHWNEWGAFQPQMQAVRRLRDRQWHQEGCFPVLTAEPPK.

The disordered stretch occupies residues 1–47; it reads MSQVAKAAATTAVNPGPDGKGKGTPSTGTAPAPGPTPVPASVPRPAA. Residue Ser-2 is modified to N-acetylserine. Positions 2–56 are N-terminal arm; it reads SQVAKAAATTAVNPGPDGKGKGTPSTGTAPAPGPTPVPASVPRPAAKVGELPPGS. Positions 32-42 are enriched in pro residues; it reads APGPTPVPASV. 2 consecutive Beta/gamma crystallin 'Greek key' domains span residues 57–96 and 97–141; these read YRLV…IVLS and GPWV…RPIR. Residues 142-146 form a connecting peptide region; the sequence is MDSQE. 2 consecutive Beta/gamma crystallin 'Greek key' domains span residues 147 to 188 and 189 to 231; these read HKIC…TVSS and GTWV…RRLR. Residues 233-250 are C-terminal arm; that stretch reads RQWHQEGCFPVLTAEPPK.

The protein belongs to the beta/gamma-crystallin family. In terms of assembly, homo/heterodimer, or complexes of higher-order. The structure of beta-crystallin oligomers seems to be stabilized through interactions between the N-terminal arms. Specific cleavages in the N-terminal arm occur during lens maturation and give rise to truncated forms, leading to impaired oligomerization and protein insolubilization. The protease responsible for this partial degradation could be calpain II.

In terms of biological role, crystallins are the dominant structural components of the vertebrate eye lens. In Rattus norvegicus (Rat), this protein is Beta-crystallin B1 (Crybb1).